We begin with the raw amino-acid sequence, 68 residues long: Large ribosomal subunit protein uL29 (68 aa).

Belongs to the universal ribosomal protein uL29 family.

The protein is Large ribosomal subunit protein uL29 of Streptococcus uberis (strain ATCC BAA-854 / 0140J).